Consider the following 348-residue polypeptide: Phosphate acyltransferase (348 aa).

Belongs to the PlsX family. As to quaternary structure, homodimer. Probably interacts with PlsY.

Its subcellular location is the cytoplasm. The catalysed reaction is a fatty acyl-[ACP] + phosphate = an acyl phosphate + holo-[ACP]. Its pathway is lipid metabolism; phospholipid metabolism. Functionally, catalyzes the reversible formation of acyl-phosphate (acyl-PO(4)) from acyl-[acyl-carrier-protein] (acyl-ACP). This enzyme utilizes acyl-ACP as fatty acyl donor, but not acyl-CoA. This is Phosphate acyltransferase from Rhizorhabdus wittichii (strain DSM 6014 / CCUG 31198 / JCM 15750 / NBRC 105917 / EY 4224 / RW1) (Sphingomonas wittichii).